The primary structure comprises 241 residues: Orotidine 5'-phosphate decarboxylase (241 aa).

Substrate-binding positions include Asp-15, Lys-36, 63 to 72 (DLKFHDIPNT), Thr-127, Arg-189, Gln-198, Gly-218, and Arg-219. Lys-65 serves as the catalytic Proton donor.

It belongs to the OMP decarboxylase family. Type 1 subfamily. As to quaternary structure, homodimer.

It carries out the reaction orotidine 5'-phosphate + H(+) = UMP + CO2. Its pathway is pyrimidine metabolism; UMP biosynthesis via de novo pathway; UMP from orotate: step 2/2. Catalyzes the decarboxylation of orotidine 5'-monophosphate (OMP) to uridine 5'-monophosphate (UMP). The polypeptide is Orotidine 5'-phosphate decarboxylase (Prochlorococcus marinus (strain MIT 9211)).